The sequence spans 161 residues: Allophycocyanin alpha chain (161 aa).

Asparagine 71 bears the N4-methylasparagine mark. A (2R,3E)-phycocyanobilin-binding site is contributed by cysteine 81.

This sequence belongs to the phycobiliprotein family. Heterodimer of an alpha and a beta chain. Post-translationally, contains one covalently linked phycocyanobilin chromophore.

The protein localises to the plastid. The protein resides in the chloroplast thylakoid membrane. Its function is as follows. Light-harvesting photosynthetic bile pigment-protein from the phycobiliprotein complex. Allophycocyanin has a maximum absorption at approximately 650 nanometers. This is Allophycocyanin alpha chain (apcA) from Aglaothamnion neglectum (Red alga).